A 365-amino-acid polypeptide reads, in one-letter code: Pyridoxal reductase, chloroplastic (365 aa).

A chloroplast-targeting transit peptide spans 1–15 (MALTLSTTKTFTNIN). Tyrosine 94 (proton donor) is an active-site residue.

Belongs to the aldo/keto reductase family. Monomer. As to expression, expressed in cotyledons, embryos, flowers, shoots, roots and seeds.

It is found in the plastid. The protein resides in the chloroplast. The catalysed reaction is pyridoxine + NADP(+) = pyridoxal + NADPH + H(+). It participates in cofactor degradation; B6 vitamer degradation; pyridoxal from pyridoxine (dehydrogenase route): step 1/1. In terms of biological role, catalyzes the reduction of pyridoxal (PL) with NADPH and oxidation of pyridoxine (PN) with NADP(+). Involved in the PLP salvage pathway. This is Pyridoxal reductase, chloroplastic (PLR1) from Arabidopsis thaliana (Mouse-ear cress).